The primary structure comprises 374 residues: SH2 domain-containing protein 2A (374 aa).

Residues 116–207 (WFHGFITRRE…PYGEILTQPL (92 aa)) enclose the SH2 domain. The segment at 213–232 (EPAGLSLRADSDSGSKRQDP) is disordered. Basic and acidic residues predominate over residues 221–232 (ADSDSGSKRQDP). Position 237 is a phosphoserine (S237). Positions 241–301 (QQGQAQASGH…QAPPINPIYQ (61 aa)) are disordered. Over residues 256–266 (ASQQKATSQAS) the composition is skewed to polar residues. The SH3-binding motif lies at 267 to 273 (RPRPPIP). A compositionally biased stretch (pro residues) spans 268-279 (PRPPIPAKPQLP). Phosphoserine is present on S316. Disordered regions lie at residues 321 to 340 (PSNIYAEVEGPSGTAPIGHP) and 353 to 374 (GQVREVQGKISSRSRAERGSPS).

Interacts with KDR. Interacts with p56-LCK, TXK and ITK. Post-translationally, phosphorylated on tyrosine residues upon TCR-stimulation. As to expression, expression limited to tissues of the immune system and, in particular, activated T-cells and natural killer cells. Expressed in the thymus, lymph node, and to a lesser extent, in the spleen and bone marrow. According to PubMed:10553045, also expressed in the lung.

The protein resides in the cytoplasm. It localises to the cell membrane. In terms of biological role, could be a T-cell-specific adapter protein involved in the control of T-cell activation. May play a role in p56-LCK-mediated T-cell signaling. Could be involved in the regulation of responses to T-cell activation stimuli, specifically proliferation and lymphokine production. Interactions with ITK and TXK may provide important biochemical links of these two important kinases with other components in the T-cell activation machinery. The polypeptide is SH2 domain-containing protein 2A (Sh2d2a) (Mus musculus (Mouse)).